The following is a 119-amino-acid chain: Large ribosomal subunit protein bL20 (119 aa).

This sequence belongs to the bacterial ribosomal protein bL20 family.

In terms of biological role, binds directly to 23S ribosomal RNA and is necessary for the in vitro assembly process of the 50S ribosomal subunit. It is not involved in the protein synthesizing functions of that subunit. The protein is Large ribosomal subunit protein bL20 of Burkholderia cenocepacia (strain HI2424).